The following is a 145-amino-acid chain: D-aminoacyl-tRNA deacylase (145 aa).

A Gly-cisPro motif, important for rejection of L-amino acids motif is present at residues 137-138 (GP).

This sequence belongs to the DTD family. In terms of assembly, homodimer.

The protein resides in the cytoplasm. The enzyme catalyses glycyl-tRNA(Ala) + H2O = tRNA(Ala) + glycine + H(+). The catalysed reaction is a D-aminoacyl-tRNA + H2O = a tRNA + a D-alpha-amino acid + H(+). An aminoacyl-tRNA editing enzyme that deacylates mischarged D-aminoacyl-tRNAs. Also deacylates mischarged glycyl-tRNA(Ala), protecting cells against glycine mischarging by AlaRS. Acts via tRNA-based rather than protein-based catalysis; rejects L-amino acids rather than detecting D-amino acids in the active site. By recycling D-aminoacyl-tRNA to D-amino acids and free tRNA molecules, this enzyme counteracts the toxicity associated with the formation of D-aminoacyl-tRNA entities in vivo and helps enforce protein L-homochirality. In Escherichia coli O7:K1 (strain IAI39 / ExPEC), this protein is D-aminoacyl-tRNA deacylase.